A 169-amino-acid polypeptide reads, in one-letter code: MVRDIVIYPNEILKKPTEKVDVIDKEVKNLIRDMFDTMYEAEGVGLAANQIGVPLSVMVIDTSPKEDAPPLKLVLINPEIKEGEGKIKYKEGCLSFPGLSVEVERFQKVKVNALNEHGEPVELTLEGFPAIVFQHELDHLKGITFVDRLKGWRRRMALEKYQKLLKSRK.

C93 and H135 together coordinate Fe cation. E136 is an active-site residue. H139 contributes to the Fe cation binding site.

It belongs to the polypeptide deformylase family. Fe(2+) serves as cofactor.

The catalysed reaction is N-terminal N-formyl-L-methionyl-[peptide] + H2O = N-terminal L-methionyl-[peptide] + formate. Removes the formyl group from the N-terminal Met of newly synthesized proteins. Requires at least a dipeptide for an efficient rate of reaction. N-terminal L-methionine is a prerequisite for activity but the enzyme has broad specificity at other positions. This chain is Peptide deformylase, found in Aquifex aeolicus (strain VF5).